A 389-amino-acid chain; its full sequence is Multidrug resistance protein 1 (389 aa).

11 helical membrane-spanning segments follow: residues 6-26, 42-62, 71-91, 102-122, 134-154, 160-180, 202-222, 243-263, 286-306, 336-356, and 358-378; these read ITLT…GLVI, AVGY…PIAG, KIMI…FGIG, MLGG…IADI, YMSA…GFLA, LPFF…ILTL, IFAP…FGLA, IAIM…VLFD, VFLL…VTVF, SMFT…LFDI, and VNYP…LTIA.

This sequence belongs to the major facilitator superfamily. TCR/Tet family.

Its subcellular location is the cell membrane. Functionally, energy-dependent efflux pump responsible for decreased drug accumulation in multi-drug-resistant cells. Probably uses a transmembrane proton gradient as the energy source. Causes the efflux of a variety of toxic substances, including such structurally diverse compounds as ethidium bromide, rhodamine and acridine dyes, tetraphenylphosphonium, puromycin, chloramphenicol, doxorubicin, and fluoroquinolone antibiotics. The protein is Multidrug resistance protein 1 (bmr) of Bacillus subtilis (strain 168).